The primary structure comprises 20 residues: Citrate synthase (20 aa).

It belongs to the citrate synthase family. As to quaternary structure, homohexamer.

It carries out the reaction oxaloacetate + acetyl-CoA + H2O = citrate + CoA + H(+). Its pathway is carbohydrate metabolism; tricarboxylic acid cycle; isocitrate from oxaloacetate: step 1/2. Its activity is regulated as follows. Allosterically inhibited by NADH. This is Citrate synthase (gltA) from Streptomyces hygroscopicus.